Consider the following 224-residue polypeptide: EEF1A lysine methyltransferase 3 (224 aa).

Residues Trp58, 84–86 (GAG), Asp105, Trp134, and Ala151 contribute to the S-adenosyl-L-methionine site.

The protein belongs to the methyltransferase superfamily. METTL21 family.

Its subcellular location is the cytoplasm. The protein localises to the cytoskeleton. The protein resides in the microtubule organizing center. It localises to the centrosome. The catalysed reaction is L-lysyl-[protein] + 3 S-adenosyl-L-methionine = N(6),N(6),N(6)-trimethyl-L-lysyl-[protein] + 3 S-adenosyl-L-homocysteine + 3 H(+). The enzyme catalyses L-lysyl-[protein] + S-adenosyl-L-methionine = N(6)-methyl-L-lysyl-[protein] + S-adenosyl-L-homocysteine + H(+). It carries out the reaction N(6)-methyl-L-lysyl-[protein] + S-adenosyl-L-methionine = N(6),N(6)-dimethyl-L-lysyl-[protein] + S-adenosyl-L-homocysteine + H(+). It catalyses the reaction N(6),N(6)-dimethyl-L-lysyl-[protein] + S-adenosyl-L-methionine = N(6),N(6),N(6)-trimethyl-L-lysyl-[protein] + S-adenosyl-L-homocysteine + H(+). Its function is as follows. Protein-lysine methyltransferase that selectively mono-, di- and trimethylates 'Lys-165' of the translation elongation factors EEF1A1 and EEF1A2 in an aminoacyl-tRNA and GTP-dependent manner. EEF1A1 methylation by EEF1AKMT3 is dynamic as well as inducible by stress conditions, such as ER-stress, and plays a regulatory role on mRNA translation. This chain is EEF1A lysine methyltransferase 3, found in Xenopus tropicalis (Western clawed frog).